We begin with the raw amino-acid sequence, 508 residues long: Gasdermin-C (508 aa).

The tract at residues 1-257 (MPSMLERISK…VGYCAARSEG (257 aa)) is triggers pyroptosis.

Belongs to the gasdermin family. As to quaternary structure, homooligomer; homooligomeric ring-shaped pore complex containing 27-28 subunits when inserted in the membrane. In terms of processing, cleavage by CASP8 relieves autoinhibition by releasing the N-terminal moiety (Gasdermin-C, N-terminal) that initiates pyroptosis. The cleavage site is unclear. According to a publication, it takes place after Asp-240 in response to alpha-ketoglutarate. Another paper reports cleavage by CASP8 after Asp-365. Post-translationally, palmitoylated. As to expression, expressed mainly in trachea and spleen. In the esophagus, expressed in differentiating cells and probably in differentiated cells. Also detected in gastric epithelium.

The protein localises to the cytoplasm. It localises to the cytosol. It is found in the cell membrane. With respect to regulation, the full-length protein before cleavage is inactive: intramolecular interactions between N- and C-terminal domains mediate autoinhibition in the absence of activation signal. The intrinsic pyroptosis-inducing activity is carried by the released N-terminal moiety (Gasdermin-C, N-terminal) following cleavage by caspase CASP8. Functionally, this form constitutes the precursor of the pore-forming protein: upon cleavage, the released N-terminal moiety (Gasdermin-C, N-terminal) binds to membranes and forms pores, triggering pyroptosis. Its function is as follows. Pore-forming protein that causes membrane permeabilization and pyroptosis. Produced by the cleavage of gasdermin-C by caspase CASP8 in response to death signals. After cleavage, moves to the plasma membrane where it strongly binds to membrane inner leaflet lipids. Homooligomerizes within the membrane and forms pores of 10-15 nanometers (nm) of inner diameter, triggering pyroptosis. This is Gasdermin-C from Homo sapiens (Human).